The following is a 151-amino-acid chain: Ribonuclease H (151 aa).

Residues 1-141 (MQEVTVYSDG…ADALANKGVE (141 aa)) enclose the RNase H type-1 domain. 4 residues coordinate Mg(2+): aspartate 9, glutamate 47, aspartate 69, and aspartate 133.

This sequence belongs to the RNase H family. Monomer. Requires Mg(2+) as cofactor.

The protein resides in the cytoplasm. The enzyme catalyses Endonucleolytic cleavage to 5'-phosphomonoester.. Endonuclease that specifically degrades the RNA of RNA-DNA hybrids. The chain is Ribonuclease H from Ralstonia nicotianae (strain ATCC BAA-1114 / GMI1000) (Ralstonia solanacearum).